The following is a 440-amino-acid chain: 2-alpha-hydroxytaxane 2-O-benzoyltransferase (440 aa).

Catalysis depends on proton acceptor residues His-158 and Asp-367.

This sequence belongs to the plant acyltransferase family.

The catalysed reaction is 10-deacetyl-2-debenzoylbaccatin III + benzoyl-CoA = 10-deacetylbaccatin III + CoA. It participates in alkaloid biosynthesis; taxol biosynthesis; baccatin III from 10-deacetyl-2-debenzoylbaccatin III: step 1/2. In terms of biological role, catalyzes the conversion of 2-debenzoyl-7,13-diacetylbaccatin III, a semisynthetic substrate, to 7,13-diacetylbaccatin III. This is 2-alpha-hydroxytaxane 2-O-benzoyltransferase from Taxus cuspidata (Japanese yew).